A 117-amino-acid chain; its full sequence is Non-specific lipid-transfer protein 1 (117 aa).

The signal sequence occupies residues 1–25; sequence MAGLVKLSCLVLACMIVAGPIATNA. Cystine bridges form between Cys29/Cys76, Cys39/Cys53, Cys54/Cys99, and Cys74/Cys113.

The protein belongs to the plant LTP family.

Functionally, plant non-specific lipid-transfer proteins transfer phospholipids as well as galactolipids across membranes. May play a role in wax or cutin deposition in the cell walls of expanding epidermal cells and certain secretory tissues. This is Non-specific lipid-transfer protein 1 (LTP1) from Brassica napus (Rape).